We begin with the raw amino-acid sequence, 961 residues long: Ras-interacting protein 1 (961 aa).

Basic and acidic residues predominate over residues 1–10 (MLSGERKEGG). 3 disordered regions span residues 1 to 21 (MLSG…HLPV), 35 to 70 (LGRR…PHVE), and 96 to 116 (RGSG…QRWA). The segment covering 41 to 57 (SAASVKSSSSDTGSRSS) has biased composition (low complexity). Pro residues predominate over residues 59–68 (PLPPPPPPPH). Residue Arg-96 is modified to Omega-N-methylarginine. Positions 98–110 (SGAGGAGGPGTPG) are enriched in gly residues. In terms of domain architecture, Ras-associating spans 141-253 (PPGVLKIFAS…RRFELRGREE (113 aa)). A disordered region spans residues 261-352 (AFGAADADGT…MAPGAADAQM (92 aa)). 2 positions are modified to phosphoserine: Ser-274 and Ser-286. Positions 284-295 (AASGGAALASPG) are enriched in low complexity. Residues 296 to 307 (PGSGSGTPTGSG) show a composition bias toward gly residues. The segment covering 314 to 327 (NLSLRRSVSELSLQ) has biased composition (low complexity). 4 positions are modified to phosphoserine: Ser-320, Ser-322, Ser-325, and Ser-413. The Dilute domain maps to 594 to 895 (GRLARLIKEA…PPAERDAVDT (302 aa)).

As to quaternary structure, interacts with Ras family members that have been activated by GTP binding. Interacts with HRAS, RAP1A, RAP2, RRAS, RAF1 and RRAS2. Interacts with MYH9 and ARHGAP29. In terms of tissue distribution, detected in kidney, heart, skeletal muscle, small intestine and lung.

The protein localises to the cytoplasm. It localises to the perinuclear region. It is found in the golgi apparatus. Its subcellular location is the golgi stack. Its function is as follows. Required for the proper formation of vascular structures that develop via both vasculogenesis and angiogenesis. Acts as a critical and vascular-specific regulator of GTPase signaling, cell architecture, and adhesion, which is essential for endothelial cell morphogenesis and blood vessel tubulogenesis. Regulates the activity of Rho GTPases in part by recruiting ARHGAP29 and suppressing RhoA signaling and dampening ROCK and MYH9 activities in endothelial cells. May act as effector for Golgi-bound HRAS and other Ras-like proteins. May promote HRAS-mediated transformation. Negative regulator of amino acid starvation-induced autophagy. This is Ras-interacting protein 1 (Rasip1) from Mus musculus (Mouse).